The sequence spans 156 residues: PopC secretion inhibitor (156 aa).

The interval 1-89 is disordered; the sequence is MNPGSAPWER…PVRSRAEVHQ (89 aa). A compositionally biased stretch (basic and acidic residues) spans 8–28; that stretch reads WERRTRERMRAMSRKNGEWGD.

In terms of assembly, interacts with PopC in non-starving cells.

Its subcellular location is the cytoplasm. In response to starvation, RelA is activated resulting in the accumulation of (p)ppGpp, which causes the degradation of PopD in an FtsH(D)-dependent manner, thereby releasing pre-formed PopC for secretion. Inhibitor of protease PopC. In non-starving cells, forms a cytoplasmic complex with PopC and inhibits PopC secretion and activity. This chain is PopC secretion inhibitor, found in Myxococcus xanthus (strain DK1622).